The sequence spans 414 residues: Arrestin domain-containing protein 3 (414 aa).

Short sequence motifs (PPxY motif) lie at residues proline 346–tyrosine 349 and proline 391–tyrosine 394. Residues leucine 393–arginine 414 are disordered. Basic and acidic residues predominate over residues alanine 405 to arginine 414.

It belongs to the arrestin family. As to quaternary structure, interacts (via PPxY motifs) with NEDD4 (via WW domains). Interacts with ADRB2. Interacts with ADRB3. Interacts with HGS (via PPxY motifs). Does not bind TXN (thioredoxin). Interacts with ITCH. Interacts with WWP1 (via WW domains). Highly expressed in skeletal muscle, placenta, kidney, lung, liver, blood, adrenal gland, lymph node, mammary gland, thyroid, and trachea. Very low levels in colon, thymus, spleen, small intestine, bladder and bone marrow. Strong expression in differentiated adipocytes compared to preadipocytes. Detected in omental fat and subcutaneous fat tissue.

Its subcellular location is the cytoplasm. It localises to the cell membrane. The protein localises to the lysosome. It is found in the endosome. The protein resides in the early endosome. Its function is as follows. Adapter protein that plays a role in regulating cell-surface expression of adrenergic receptors and probably also other G protein-coupled receptors. Plays a role in NEDD4-mediated ubiquitination and endocytosis af activated ADRB2 and subsequent ADRB2 degradation. May recruit NEDD4 to ADRB2. Alternatively, may function as adapter protein that does not play a major role in recruiting NEDD4 to ADRB2, but rather plays a role in a targeting ADRB2 to endosomes. The polypeptide is Arrestin domain-containing protein 3 (ARRDC3) (Homo sapiens (Human)).